Consider the following 114-residue polypeptide: Fructose-bisphosphate aldolase 2 (114 aa).

35–38 (NIDT) contributes to the dihydroxyacetone phosphate binding site.

This sequence belongs to the class II fructose-bisphosphate aldolase family. In terms of assembly, homodimer. The cofactor is Zn(2+).

It carries out the reaction beta-D-fructose 1,6-bisphosphate = D-glyceraldehyde 3-phosphate + dihydroxyacetone phosphate. The protein operates within carbohydrate biosynthesis; Calvin cycle. It participates in carbohydrate degradation; glycolysis; D-glyceraldehyde 3-phosphate and glycerone phosphate from D-glucose: step 4/4. Its function is as follows. Catalyzes the aldol condensation of dihydroxyacetone phosphate (DHAP or glycerone-phosphate) with glyceraldehyde 3-phosphate (G3P) to form fructose 1,6-bisphosphate (FBP) in gluconeogenesis and the reverse reaction in glycolysis. The chain is Fructose-bisphosphate aldolase 2 (cbbA) from Rhodobacter capsulatus (Rhodopseudomonas capsulata).